Consider the following 476-residue polypeptide: H2.0-like homeobox protein (476 aa).

Disordered regions lie at residues 120-169 (QHLP…PSSK), 328-401 (WRHS…HQTT), and 413-476 (TASS…LAGL). 2 stretches are compositionally biased toward low complexity: residues 123–134 (PQQSPTQQQQPQ) and 158–168 (HHSGSAPAPSS). A DNA-binding region (homeobox) is located at residues 273-332 (RSWSRAVFSNLQRKGLEKRFEIQKYVTKPDRKQLAAMLGLTDAQVKVWFQNRRMKWRHSK). 2 stretches are compositionally biased toward basic and acidic residues: residues 331–346 (SKEA…EAGE) and 355–368 (EGER…RSEG). Residues 369–379 (EAESESSDSES) show a composition bias toward acidic residues. Basic and acidic residues predominate over residues 386 to 397 (DTERTEGTERSL). Positions 413-434 (TASSSTSGSSFSFSSTSSLGSG) are enriched in low complexity. Polar residues-rich tracts occupy residues 435-446 (NTHVGSASSLGG) and 455-467 (HQPS…QSPE).

It belongs to the H2.0 homeobox family. In terms of tissue distribution, expressed in Th1 cells, CD8-positive T-cells, B-cells and NK cells.

The protein resides in the nucleus. Its function is as follows. Transcription factor required for TBX21/T-bet-dependent maturation of Th1 cells as well as maintenance of Th1-specific gene expression. Involved in embryogenesis and hematopoiesis. The sequence is that of H2.0-like homeobox protein (Hlx) from Mus musculus (Mouse).